We begin with the raw amino-acid sequence, 170 residues long: Thioredoxin-like protein YneN (170 aa).

Residues 5–23 (WLAGILLIMLVGYTGWNLY) form a helical membrane-spanning segment. Residues 33–170 (IQEGQQAPDF…KEMEQKLDLD (138 aa)) form the Thioredoxin domain. Cys-71 and Cys-74 are oxidised to a cystine.

The protein belongs to the thioredoxin family.

The protein localises to the cell membrane. The sequence is that of Thioredoxin-like protein YneN (yneN) from Bacillus subtilis (strain 168).